We begin with the raw amino-acid sequence, 337 residues long: Glyceraldehyde-3-phosphate dehydrogenase, cytosolic (337 aa).

Residues 13-14 (RI), Asp-35, and Arg-82 each bind NAD(+). D-glyceraldehyde 3-phosphate contacts are provided by residues 153 to 155 (SCT), Thr-184, 213 to 214 (TG), and Arg-236. Cys-154 acts as the Nucleophile in catalysis. An NAD(+)-binding site is contributed by Asn-318.

The protein belongs to the glyceraldehyde-3-phosphate dehydrogenase family. As to quaternary structure, homotetramer.

It is found in the cytoplasm. It carries out the reaction D-glyceraldehyde 3-phosphate + phosphate + NAD(+) = (2R)-3-phospho-glyceroyl phosphate + NADH + H(+). The protein operates within carbohydrate degradation; glycolysis; pyruvate from D-glyceraldehyde 3-phosphate: step 1/5. Functionally, key enzyme in glycolysis that catalyzes the first step of the pathway by converting D-glyceraldehyde 3-phosphate (G3P) into 3-phospho-D-glyceroyl phosphate. Essential for the maintenance of cellular ATP levels and carbohydrate metabolism. This chain is Glyceraldehyde-3-phosphate dehydrogenase, cytosolic (GAPC), found in Craterostigma plantagineum (Blue gem).